Consider the following 110-residue polypeptide: UPF0060 membrane protein BPSL1340 (110 aa).

The next 4 membrane-spanning stretches (helical) occupy residues 9 to 29 (ALFV…WLVL), 34 to 54 (PAWL…LLTL), 64 to 84 (AAYG…VDGV), and 86 to 106 (LSRW…VIAL).

This sequence belongs to the UPF0060 family.

The protein localises to the cell inner membrane. This Burkholderia pseudomallei (strain K96243) protein is UPF0060 membrane protein BPSL1340.